Consider the following 359-residue polypeptide: Guanine nucleotide-binding protein subunit alpha-11 (359 aa).

S-palmitoyl cysteine attachment occurs at residues Cys9 and Cys10. Residues 38–359 (RELKLLLLGT…QHNLKEYNLV (322 aa)) form the G-alpha domain. The segment at 41-54 (KLLLLGTGESGKST) is G1 motif. Residues 46-53 (GTGESGKS) and 180-183 (LRVR) each bind GTP. Ser53 is a Mg(2+) binding site. The G2 motif stretch occupies residues 178 to 186 (DVLRVRVPT). Thr186 lines the Mg(2+) pocket. The interval 201 to 210 (FRMVDVGGQR) is G3 motif. The G4 motif stretch occupies residues 270–277 (ILFLNKKD). Residues 274-277 (NKKD) and Ala331 contribute to the GTP site. Residues 329–334 (TCATDT) are G5 motif.

This sequence belongs to the G-alpha family. G(q) subfamily. In terms of assembly, g proteins are composed of 3 units; alpha, beta and gamma. The alpha chain contains the guanine nucleotide binding site.

It is found in the cell membrane. It localises to the cytoplasm. The catalysed reaction is GTP + H2O = GDP + phosphate + H(+). Functionally, guanine nucleotide-binding proteins (G proteins) function as transducers downstream of G protein-coupled receptors (GPCRs) in numerous signaling cascades. The alpha chain contains the guanine nucleotide binding site and alternates between an active, GTP-bound state and an inactive, GDP-bound state. Signaling by an activated GPCR promotes GDP release and GTP binding. The alpha subunit has a low GTPase activity that converts bound GTP to GDP, thereby terminating the signal. Both GDP release and GTP hydrolysis are modulated by numerous regulatory proteins. Signaling is mediated via phospholipase C-beta-dependent inositol lipid hydrolysis for signal propagation: activates phospholipase C-beta: following GPCR activation, GNA11 activates PLC-beta (PLCB1, PLCB2, PLCB3 or PLCB4), leading to production of diacylglycerol (DAG) and inositol 1,4,5-trisphosphate (IP3). The polypeptide is Guanine nucleotide-binding protein subunit alpha-11 (gna11) (Xenopus laevis (African clawed frog)).